Consider the following 907-residue polypeptide: Protein translocase subunit SecA (907 aa).

Residues Gln-87, 105–109, and Asp-510 each bind ATP; that span reads GEGKT. Residues Cys-892, Cys-894, Cys-903, and His-904 each coordinate Zn(2+).

It belongs to the SecA family. In terms of assembly, monomer and homodimer. Part of the essential Sec protein translocation apparatus which comprises SecA, SecYEG and auxiliary proteins SecDF-YajC and YidC. Zn(2+) serves as cofactor.

It is found in the cell inner membrane. It localises to the cytoplasm. It carries out the reaction ATP + H2O + cellular proteinSide 1 = ADP + phosphate + cellular proteinSide 2.. Functionally, part of the Sec protein translocase complex. Interacts with the SecYEG preprotein conducting channel. Has a central role in coupling the hydrolysis of ATP to the transfer of proteins into and across the cell membrane, serving both as a receptor for the preprotein-SecB complex and as an ATP-driven molecular motor driving the stepwise translocation of polypeptide chains across the membrane. In Acinetobacter baumannii (strain ACICU), this protein is Protein translocase subunit SecA.